Reading from the N-terminus, the 166-residue chain is MTQQVKQALAAYDVVREKFGDAVSAFDSNETMPFFEVLDTDQWPDIALFMRDHPKLKFNYMACLSGVDYPQEEKLGIVCNLESVAALGHRVAVKVRCSRDGGSIPSVACVWHTANWHEREAYDMFGMLFSGHPDLRRILCPEDWEGFPLRKDYKVQETYHGIKVPY.

Belongs to the complex I 30 kDa subunit family. In terms of assembly, NDH-1 is composed of 14 different subunits. Subunits NuoB, C, D, E, F, and G constitute the peripheral sector of the complex.

It localises to the cell inner membrane. It carries out the reaction a quinone + NADH + 5 H(+)(in) = a quinol + NAD(+) + 4 H(+)(out). In terms of biological role, NDH-1 shuttles electrons from NADH, via FMN and iron-sulfur (Fe-S) centers, to quinones in the respiratory chain. The immediate electron acceptor for the enzyme in this species is believed to be a menaquinone. Couples the redox reaction to proton translocation (for every two electrons transferred, four hydrogen ions are translocated across the cytoplasmic membrane), and thus conserves the redox energy in a proton gradient. This Chlorobium phaeobacteroides (strain DSM 266 / SMG 266 / 2430) protein is NADH-quinone oxidoreductase subunit C.